The sequence spans 429 residues: C4-dicarboxylate transport protein (429 aa).

8 consecutive transmembrane segments (helical) span residues Val9–Pro29, Leu45–Met65, Leu79–Ile99, Gly149–Gly169, Val185–Met205, Leu223–Ala243, Ile308–Met328, and Ala356–Ile376.

It belongs to the dicarboxylate/amino acid:cation symporter (DAACS) (TC 2.A.23) family.

It is found in the cell inner membrane. Its function is as follows. Responsible for the transport of dicarboxylates such as succinate, fumarate, and malate from the periplasm across the membrane. The sequence is that of C4-dicarboxylate transport protein from Burkholderia ambifaria (strain ATCC BAA-244 / DSM 16087 / CCUG 44356 / LMG 19182 / AMMD) (Burkholderia cepacia (strain AMMD)).